The following is an 801-amino-acid chain: Leucine--tRNA ligase (801 aa).

The 'HIGH' region signature appears at 39-50 (PYPSGAGIHVGH). A 'KMSKS' region motif is present at residues 578-582 (KMSKS). Lys581 serves as a coordination point for ATP.

The protein belongs to the class-I aminoacyl-tRNA synthetase family.

The protein localises to the cytoplasm. The catalysed reaction is tRNA(Leu) + L-leucine + ATP = L-leucyl-tRNA(Leu) + AMP + diphosphate. The polypeptide is Leucine--tRNA ligase (Mesoplasma florum (strain ATCC 33453 / NBRC 100688 / NCTC 11704 / L1) (Acholeplasma florum)).